The sequence spans 208 residues: Mediator of RNA polymerase II transcription subunit 18 (208 aa).

The residue at position 66 (Ser66) is a Phosphoserine.

This sequence belongs to the Mediator complex subunit 18 family. In terms of assembly, component of the Mediator complex, which is composed of MED1, MED4, MED6, MED7, MED8, MED9, MED10, MED11, MED12, MED13, MED13L, MED14, MED15, MED16, MED17, MED18, MED19, MED20, MED21, MED22, MED23, MED24, MED25, MED26, MED27, MED29, MED30, MED31, CCNC, CDK8 and CDC2L6/CDK11. The MED12, MED13, CCNC and CDK8 subunits form a distinct module termed the CDK8 module. Mediator containing the CDK8 module is less active than Mediator lacking this module in supporting transcriptional activation. Individual preparations of the Mediator complex lacking one or more distinct subunits have been variously termed ARC, CRSP, DRIP, PC2, SMCC and TRAP.

The protein localises to the nucleus. Component of the Mediator complex, a coactivator involved in the regulated transcription of nearly all RNA polymerase II-dependent genes. Mediator functions as a bridge to convey information from gene-specific regulatory proteins to the basal RNA polymerase II transcription machinery. Mediator is recruited to promoters by direct interactions with regulatory proteins and serves as a scaffold for the assembly of a functional preinitiation complex with RNA polymerase II and the general transcription factors. This chain is Mediator of RNA polymerase II transcription subunit 18 (MED18), found in Bos taurus (Bovine).